A 199-amino-acid polypeptide reads, in one-letter code: Putative ATP-dependent Clp protease proteolytic subunit-like (199 aa).

Belongs to the peptidase S14 family. As to quaternary structure, component of the chloroplastic Clp protease core complex.

The protein localises to the plastid. It is found in the cyanelle. Has lost the two conserved residues (Ser and His) proposed to be part of the active site. Therefore it could be inactive. In Cyanophora paradoxa, this protein is Putative ATP-dependent Clp protease proteolytic subunit-like (clpP-B).